The primary structure comprises 337 residues: DNA-directed RNA polymerase subunit alpha (337 aa).

The tract at residues 1-231 (MRNITTSAYT…KQLSVFDKIT (231 aa)) is alpha N-terminal domain (alpha-NTD). The segment at 247-337 (ENTKLLQNIT…IAELKAQNEG (91 aa)) is alpha C-terminal domain (alpha-CTD).

Belongs to the RNA polymerase alpha chain family. Homodimer. The RNAP catalytic core consists of 2 alpha, 1 beta, 1 beta' and 1 omega subunit. When a sigma factor is associated with the core the holoenzyme is formed, which can initiate transcription.

It carries out the reaction RNA(n) + a ribonucleoside 5'-triphosphate = RNA(n+1) + diphosphate. Its function is as follows. DNA-dependent RNA polymerase catalyzes the transcription of DNA into RNA using the four ribonucleoside triphosphates as substrates. The chain is DNA-directed RNA polymerase subunit alpha from Campylobacter jejuni subsp. jejuni serotype O:2 (strain ATCC 700819 / NCTC 11168).